We begin with the raw amino-acid sequence, 562 residues long: Nucleoprotein (562 aa).

Residues 53–238 (MRRVKRDDSD…ITQEESQINI (186 aa)) form a binding site for the cap structure m7GTP region. 2 residues coordinate Mn(2+): aspartate 381 and glutamate 383. The Zn(2+) site is built by glutamate 391, cysteine 498, histidine 501, and cysteine 522. Aspartate 526 is a binding site for Mn(2+).

This sequence belongs to the arenaviridae nucleocapsid protein family. In terms of assembly, homomultimerizes to form the nucleocapsid. Binds to viral genomic RNA. Interacts with glycoprotein G2. Interacts with protein Z; this interaction probably directs the encapsidated genome to budding sites. Interacts with protein L; this interaction does not interfere with Z-L interaction. Interacts with host IKBKE (via Protein kinase domain); the interaction inhibits IKBKE kinase activity.

It is found in the virion. The protein resides in the host cytoplasm. Its function is as follows. Encapsidates the genome, protecting it from nucleases. The encapsidated genomic RNA is termed the nucleocapsid (NC). Serves as template for viral transcription and replication. The increased presence of protein N in host cell does not seem to trigger the switch from transcription to replication as observed in other negative strain RNA viruses. Through the interaction with host IKBKE, strongly inhibits the phosphorylation and nuclear translocation of host IRF3, a protein involved in interferon activation pathway, leading to the inhibition of interferon-beta and IRF3-dependent promoters activation. Also encodes a functional 3'-5' exoribonuclease that degrades preferentially dsRNA substrates and thereby participates in the suppression of interferon induction. In Neotoma (wood rats), this protein is Nucleoprotein.